A 497-amino-acid chain; its full sequence is Aspartyl/glutamyl-tRNA(Asn/Gln) amidotransferase subunit B (497 aa).

The protein belongs to the GatB/GatE family. GatB subfamily. Heterotrimer of A, B and C subunits.

It catalyses the reaction L-glutamyl-tRNA(Gln) + L-glutamine + ATP + H2O = L-glutaminyl-tRNA(Gln) + L-glutamate + ADP + phosphate + H(+). It carries out the reaction L-aspartyl-tRNA(Asn) + L-glutamine + ATP + H2O = L-asparaginyl-tRNA(Asn) + L-glutamate + ADP + phosphate + 2 H(+). Functionally, allows the formation of correctly charged Asn-tRNA(Asn) or Gln-tRNA(Gln) through the transamidation of misacylated Asp-tRNA(Asn) or Glu-tRNA(Gln) in organisms which lack either or both of asparaginyl-tRNA or glutaminyl-tRNA synthetases. The reaction takes place in the presence of glutamine and ATP through an activated phospho-Asp-tRNA(Asn) or phospho-Glu-tRNA(Gln). This is Aspartyl/glutamyl-tRNA(Asn/Gln) amidotransferase subunit B from Nocardioides sp. (strain ATCC BAA-499 / JS614).